A 140-amino-acid polypeptide reads, in one-letter code: PDZ domain-containing protein 11 (140 aa).

One can recognise a PDZ domain in the interval 47–129; it reads IVTLKKPPGA…ISMRVRFFPY (83 aa).

As to quaternary structure, interacts with ATP2B1, ATP2B2, ATP2B3, ATP2B4 and ATP7A. Interacts with PLEKHA7 (via WW domains) at zonula adherens; this interaction is essential for the interaction between PLEKHA7 and the ADAM10-binding protein TSPAN33. Interacts with SLC5A6.

The protein localises to the cytoplasm. It localises to the cell junction. The protein resides in the adherens junction. Its subcellular location is the cell membrane. Mediates docking of ADAM10 to zonula adherens by interacting with PLEKHA7 which is required for PLEKHA7 to interact with the ADAM10-binding protein TSPAN33. This chain is PDZ domain-containing protein 11 (Pdzd11), found in Mus musculus (Mouse).